Consider the following 458-residue polypeptide: UDP-N-acetylmuramate--L-alanine ligase (458 aa).

118–124 (GTHGKTT) contributes to the ATP binding site.

Belongs to the MurCDEF family.

Its subcellular location is the cytoplasm. It catalyses the reaction UDP-N-acetyl-alpha-D-muramate + L-alanine + ATP = UDP-N-acetyl-alpha-D-muramoyl-L-alanine + ADP + phosphate + H(+). The protein operates within cell wall biogenesis; peptidoglycan biosynthesis. Functionally, cell wall formation. The chain is UDP-N-acetylmuramate--L-alanine ligase from Clostridium botulinum (strain Okra / Type B1).